A 102-amino-acid polypeptide reads, in one-letter code: ATP-dependent Clp protease adapter protein ClpS (102 aa).

This sequence belongs to the ClpS family. As to quaternary structure, binds to the N-terminal domain of the chaperone ClpA.

Its function is as follows. Involved in the modulation of the specificity of the ClpAP-mediated ATP-dependent protein degradation. The sequence is that of ATP-dependent Clp protease adapter protein ClpS from Desulfotalea psychrophila (strain LSv54 / DSM 12343).